A 223-amino-acid chain; its full sequence is MKSVITALPKGRLMGEVIDILKQSGFISNNIDINTLSRQLVFHDKKTRNSFLLAKPKDVPVYVEHGAADLGITGKDVLLEHGRNLYEMVDLGVGKCKLVVAVPESKGYKSLADIPEYSRVATSYPEIVKKFFQGKGIQVEVIKLNGSVELAPLVDLADVIVDISSTGTTLKKNNLIPMETIVTSSARLVVNNVSYKIKHKQISELINKINEVVKSGNTEISRK.

Belongs to the ATP phosphoribosyltransferase family. Short subfamily. Heteromultimer composed of HisG and HisZ subunits.

The protein resides in the cytoplasm. The catalysed reaction is 1-(5-phospho-beta-D-ribosyl)-ATP + diphosphate = 5-phospho-alpha-D-ribose 1-diphosphate + ATP. It functions in the pathway amino-acid biosynthesis; L-histidine biosynthesis; L-histidine from 5-phospho-alpha-D-ribose 1-diphosphate: step 1/9. In terms of biological role, catalyzes the condensation of ATP and 5-phosphoribose 1-diphosphate to form N'-(5'-phosphoribosyl)-ATP (PR-ATP). Has a crucial role in the pathway because the rate of histidine biosynthesis seems to be controlled primarily by regulation of HisG enzymatic activity. The polypeptide is ATP phosphoribosyltransferase (Halothermothrix orenii (strain H 168 / OCM 544 / DSM 9562)).